The primary structure comprises 813 residues: Protein tramtrack, alpha isoform (813 aa).

Positions 33–98 constitute a BTB domain; it reads TDVTLAVEGQ…MYRGEVSVDQ (66 aa). Disordered regions lie at residues 118 to 148, 171 to 324, 356 to 428, and 526 to 585; these read EVNDDKPSPAAAAAGAGATGSESTATTPQLQ, ANAG…GPSE, TTPA…MPKK, and AGLP…LDDQ. Over residues 125–145 the composition is skewed to low complexity; the sequence is SPAAAAAGAGATGSESTATTP. Polar residues predominate over residues 176 to 187; that stretch reads TPTLPVQPSLLS. Basic residues predominate over residues 192–201; sequence PKRKRGRPRK. A phosphoserine mark is found at S203, S205, and S206. At T209 the chain carries Phosphothreonine. A compositionally biased stretch (basic and acidic residues) spans 254–285; that stretch reads HTDDLNESRDSLPSKRSKNSKDHRVVSHHEDN. Polar residues-rich tracts occupy residues 302 to 324, 356 to 369, and 377 to 388; these read LFGSSSTTISATAPGGSSTGPSE, TTPAQQGSPQTPTK, and ATGSNNSNSLLK. The segment covering 560 to 578 has biased composition (basic residues); it reads SGKKGAKRPIQRRRVRRKA. 2 consecutive C2H2-type zinc fingers follow at residues 610–638 and 646–669; these read YRCTECAKENMQKTFKNKYSFQRHAFLYH and FPCPVCSKEFSRPDKMKNHLKMTH. Phosphoserine is present on S682.

As to quaternary structure, interacts with CoRest/CG33525, suggesting that it acts by recruiting a CoRest-containing corepressor complex. Interacts with phyl.

The protein resides in the nucleus. In terms of biological role, binds to a number of sites in the transcriptional regulatory region of ftz. Isoform alpha is required to repress genes that promote the R7 cell fate. Probable repressor of the transcription of the segmentation genes ftz, eve, h, odd, run, and en. May bind to the region 5'-AGGG[CT]GG-3'. Degradation of ttk is directed by binding of sinah or sina, via the adapter molecule phyl which binds to the BTB domain of ttk. This is Protein tramtrack, alpha isoform (ttk) from Drosophila melanogaster (Fruit fly).